The primary structure comprises 207 residues: ATP synthase subunit b 2 (207 aa).

Residues 58–78 traverse the membrane as a helical segment; the sequence is LLWLVITFGVFYLLMQKVIAP.

Belongs to the ATPase B chain family. In terms of assembly, F-type ATPases have 2 components, F(1) - the catalytic core - and F(0) - the membrane proton channel. F(1) has five subunits: alpha(3), beta(3), gamma(1), delta(1), epsilon(1). F(0) has three main subunits: a(1), b(2) and c(10-14). The alpha and beta chains form an alternating ring which encloses part of the gamma chain. F(1) is attached to F(0) by a central stalk formed by the gamma and epsilon chains, while a peripheral stalk is formed by the delta and b chains.

The protein localises to the cell inner membrane. Its function is as follows. F(1)F(0) ATP synthase produces ATP from ADP in the presence of a proton or sodium gradient. F-type ATPases consist of two structural domains, F(1) containing the extramembraneous catalytic core and F(0) containing the membrane proton channel, linked together by a central stalk and a peripheral stalk. During catalysis, ATP synthesis in the catalytic domain of F(1) is coupled via a rotary mechanism of the central stalk subunits to proton translocation. Functionally, component of the F(0) channel, it forms part of the peripheral stalk, linking F(1) to F(0). The b'-subunit is a diverged and duplicated form of b found in plants and photosynthetic bacteria. The chain is ATP synthase subunit b 2 (atpF2) from Rhizobium johnstonii (strain DSM 114642 / LMG 32736 / 3841) (Rhizobium leguminosarum bv. viciae).